We begin with the raw amino-acid sequence, 1339 residues long: Aldehyde oxidase 1 (1339 aa).

The 88-residue stretch at 5-92 (SELLFYVNGR…GAAVTTVEGI (88 aa)) folds into the 2Fe-2S ferredoxin-type domain. Positions 44, 49, 52, and 74 each coordinate [2Fe-2S] cluster. Gln113 is a Mo-molybdopterin binding site. 4 residues coordinate [2Fe-2S] cluster: Cys114, Cys117, Cys149, and Cys151. Cys151 provides a ligand contact to Mo-molybdopterin. The FAD-binding PCMH-type domain maps to 236–421 (FGSDRMTWIS…ISVNIPYSRK (186 aa)). FAD-binding positions include 264–271 (VVMGNTSV), Ala345, Ser354, His358, Asp367, and Leu411. Residues 807 to 808 (AF) and Met1048 each bind Mo-molybdopterin. Ser1069 carries the phosphoserine modification. Mo-molybdopterin contacts are provided by residues 1089–1092 (GSVV), Gln1204, and Leu1269. Glu1271 acts as the Proton acceptor; for azaheterocycle hydroxylase activity in catalysis.

This sequence belongs to the xanthine dehydrogenase family. In terms of assembly, homodimer. It depends on [2Fe-2S] cluster as a cofactor. FAD serves as cofactor. Requires Mo-molybdopterin as cofactor. The N-terminus is blocked. Expressed at high levels in liver, lung and spleen. Also expressed in kindey, eye, testis, duodenum, esophagus and thymus (at protein level).

It localises to the cytoplasm. The enzyme catalyses an aldehyde + O2 + H2O = a carboxylate + H2O2 + H(+). The catalysed reaction is retinal + O2 + H2O = retinoate + H2O2 + H(+). Functionally, oxidase with broad substrate specificity, oxidizing aromatic azaheterocycles, such as N1-methylnicotinamide, N-methylphthalazinium and phthalazine, as well as aldehydes, such as benzaldehyde, retinal, pyridoxal, and vanillin. Plays a key role in the metabolism of xenobiotics and drugs containing aromatic azaheterocyclic substituents. Is probably involved in the regulation of reactive oxygen species homeostasis. May be a prominent source of superoxide generation via the one-electron reduction of molecular oxygen. May also catalyze nitric oxide (NO) production via the reduction of nitrite to NO with NADH or aldehyde as electron donor. May play a role in adipogenesis. This is Aldehyde oxidase 1 from Bos taurus (Bovine).